Consider the following 311-residue polypeptide: ATP synthase subunit gamma, mitochondrial (311 aa).

The N-terminal 33 residues, 1–33 (MLSRIVSNNATRSVMCHQAQVGILYKTNPVRTY), are a transit peptide targeting the mitochondrion.

Belongs to the ATPase gamma chain family. As to quaternary structure, F-type ATPases have 2 components, CF(1) - the catalytic core - and CF(0) - the membrane proton channel. CF(1) has five subunits: alpha(3), beta(3), gamma(1), delta(1), epsilon(1). CF(0) has three main subunits: a, b and c.

It localises to the mitochondrion. The protein localises to the mitochondrion inner membrane. Functionally, mitochondrial membrane ATP synthase (F(1)F(0) ATP synthase or Complex V) produces ATP from ADP in the presence of a proton gradient across the membrane which is generated by electron transport complexes of the respiratory chain. F-type ATPases consist of two structural domains, F(1) - containing the extramembraneous catalytic core, and F(0) - containing the membrane proton channel, linked together by a central stalk and a peripheral stalk. During catalysis, ATP synthesis in the catalytic domain of F(1) is coupled via a rotary mechanism of the central stalk subunits to proton translocation. Part of the complex F(1) domain and the central stalk which is part of the complex rotary element. The gamma subunit protrudes into the catalytic domain formed of alpha(3)beta(3). Rotation of the central stalk against the surrounding alpha(3)beta(3) subunits leads to hydrolysis of ATP in three separate catalytic sites on the beta subunits. This is ATP synthase subunit gamma, mitochondrial (ATP3) from Saccharomyces cerevisiae (strain ATCC 204508 / S288c) (Baker's yeast).